The following is an 82-amino-acid chain: Putative antimicrobial peptide 7848 (82 aa).

The first 17 residues, 1–17, serve as a signal peptide directing secretion; that stretch reads MNENLWAAPAPKKLSKH. The tract at residues 16-60 is disordered; the sequence is KHFFGRGGPLGKETGPNLFPKKPGAGKGLGFPPTKKPRGQPRVLK. A propeptide spanning residues 38–82 is cleaved from the precursor; it reads PGAGKGLGFPPTKKPRGQPRVLKKPKWNSEGLIGILHRGSDGVQF. Basic residues predominate over residues 50-60; it reads KKPRGQPRVLK.

It belongs to the non-disulfide-bridged peptide (NDBP) superfamily. Short antimicrobial peptide (group 4) family. In terms of tissue distribution, expressed by the venom gland.

It localises to the secreted. The polypeptide is Putative antimicrobial peptide 7848 (Urodacus yaschenkoi (Inland robust scorpion)).